Reading from the N-terminus, the 244-residue chain is 5-oxoprolinase subunit A (244 aa).

Belongs to the LamB/PxpA family. As to quaternary structure, forms a complex composed of PxpA, PxpB and PxpC.

It catalyses the reaction 5-oxo-L-proline + ATP + 2 H2O = L-glutamate + ADP + phosphate + H(+). In terms of biological role, catalyzes the cleavage of 5-oxoproline to form L-glutamate coupled to the hydrolysis of ATP to ADP and inorganic phosphate. This Salmonella dublin (strain CT_02021853) protein is 5-oxoprolinase subunit A.